An 82-amino-acid polypeptide reads, in one-letter code: Bowman-Birk type proteinase inhibitor (82 aa).

The disordered stretch occupies residues 1 to 24 (SGHHDETTDEPSESSKPCCDQCSC). Disulfide bonds link Cys-18/Cys-72, Cys-19/Cys-34, Cys-22/Cys-68, Cys-24/Cys-32, Cys-42/Cys-49, Cys-46/Cys-61, and Cys-51/Cys-59.

The protein belongs to the Bowman-Birk serine protease inhibitor family.

Functionally, trypsin and chymotrypsin are inhibited simultaneously. There are two separate reactive sites for trypsin and chymotrypsin but they do not inhibit simultaneously. This is Bowman-Birk type proteinase inhibitor from Phaseolus angularis (Azuki bean).